An 818-amino-acid chain; its full sequence is Adhesion G protein-coupled receptor E5 (818 aa).

The N-terminal stretch at 1–23 (MRGVRCPGLLVVCILLSLSGAGT) is a signal peptide. Topologically, residues 24–533 (QKAESKNCAK…VQDPRLELIT (510 aa)) are extracellular. In terms of domain architecture, EGF-like 1 spans 27 to 68 (ESKNCAKWCPINSKCVSNRSCVCKPGFSSEKELITNPAESCE). 12 cysteine pairs are disulfide-bonded: C31–C41, C35–C47, C49–C67, C73–C86, C80–C95, C97–C118, C169–C182, C176–C191, C193–C212, C218–C231, C225–C240, and C242–C260. N44 carries an N-linked (GlcNAc...) asparagine glycan. The EGF-like 2; calcium-binding domain occupies 69–119 (DINECLLPGFSCGDFAMCKNSEGSYTCVCNLGYKLLSGAESFVNESENTCQ). N112 carries an N-linked (GlcNAc...) asparagine glycan. Residues 165 to 213 (DVNECISGQNHCHQSTHCINKLGGYSCICRQGWKPVPGSPNGPVSTVCE) form the EGF-like 3; calcium-binding domain. One can recognise an EGF-like 4; calcium-binding domain in the interval 214–261 (DVDECSSGQHQCHNSTVCKNTVGSYKCHCRPGWKPTSGSLRGPDTICQ). N227 is a glycosylation site (N-linked (GlcNAc...) asparagine). 2 N-linked (GlcNAc...) asparagine glycosylation sites follow: N299 and N395. The 179-residue stretch at 347 to 525 (PFTYTSPSNT…AILMAQYHVQ (179 aa)) folds into the GAIN-B domain. Phosphoserine is present on S425. 2 N-linked (GlcNAc...) asparagine glycosylation sites follow: N461 and N502. Disulfide bonds link C482–C507 and C499–C509. Residues 482–525 (CAFWKAHNGNGYWDTDGCSMNGTGFCHCNHLTSFAILMAQYHVQ) are GPS. The helical transmembrane segment at 534–554 (KVGLLLSLICLLLCILTFLLV) threads the bilayer. The Cytoplasmic segment spans residues 555–562 (KPIQSSRT). Residues 563-583 (MVHLHLCICLFLGSIIFLVGV) traverse the membrane as a helical segment. The Extracellular segment spans residues 584-602 (ENEGGEVGLRCRLVAMMLH). Residues 603–623 (FCFLAAFCWMALEGVELYFLV) form a helical membrane-spanning segment. The Cytoplasmic segment spans residues 624 to 637 (VRVFQGQGLSTWQR). The helical transmembrane segment at 638 to 658 (CLIGYGVPLLIVAISMAVVKM) threads the bilayer. The Extracellular portion of the chain corresponds to 659 to 679 (DGYGHATYCWLDFRKQGFLWS). The helical transmembrane segment at 680–700 (FSGPVAFIIFCNAAIFVITVW) threads the bilayer. Residues 701-723 (KLTKKFSEINPNMKKLRKARVLT) lie on the Cytoplasmic side of the membrane. A helical transmembrane segment spans residues 724 to 744 (ITAIAQLLVLGCTWGFGLFLF). The Extracellular portion of the chain corresponds to 745 to 752 (NPHSTWLS). The helical transmembrane segment at 753-773 (YIFTLLNCLQGLFLYVMLCLL) threads the bilayer. The Cytoplasmic portion of the chain corresponds to 774 to 818 (NKKVREEYWKWACMVTGSKYTEFNSSTTGTGTSQTRALRSSESGM). At S798 the chain carries Phosphoserine. The segment covering 799–808 (STTGTGTSQT) has biased composition (low complexity). The segment at 799–818 (STTGTGTSQTRALRSSESGM) is disordered. T808 carries the phosphothreonine modification. Residues 809–818 (RALRSSESGM) are compositionally biased toward polar residues. Phosphoserine occurs at positions 814 and 816.

The protein belongs to the G-protein coupled receptor 2 family. LN-TM7 subfamily. Forms a heterodimer, consisting of a large extracellular region (alpha subunit) non-covalently linked to a seven-transmembrane moiety (beta subunit). Interacts with complement decay-accelerating factor (DAF). The largest isoform (isoform 1) do not interact with DAF. Also interacts with chondroitin sulfate. In terms of processing, proteolytically cleaved into 2 subunits, an extracellular alpha subunit and a seven-transmembrane subunit. As to expression, although predominantly expressed by cells of the immune system, expressed ubiquitously with particularly high levels of expression in the lung and the thymus gland. In the spleen, expression is detected on most myeloid cells and variable portions of T-cells, B-cells and NK cells. In the bone marrow, expressed in nearly all myeloid cells, whereas little if any expression is found on erythroid cells.

The protein localises to the cell membrane. It localises to the secreted. The protein resides in the extracellular space. In terms of biological role, receptor potentially involved in both adhesion and signaling processes early after leukocyte activation. Plays an essential role in leukocyte migration. The protein is Adhesion G protein-coupled receptor E5 of Mus musculus (Mouse).